A 397-amino-acid chain; its full sequence is MDYRPSDSSGTDDDLPPSHQGRYQRNARPTGNGRPSVLNSAPLSRVHNEMETQIHLIEQEAYSSILRAFKAQSDAITWEKESLITELRKELRVSDEEHRELLSRVNADEMIRRIREWRKANSLQSSVPQLVHDAPSPAVSGSRKKQKTSQSIASLAMGPPSPSLHPSMQPSSSALRRGGPPPGPKTKKPKTSMQYPSTGIAGRPQAGALTNEPGESGSYDPLVGRKVWTKWPDDNQYYEAVITDYNPVEGRHALVYDINSANETWEWVNLKEISPGDIRWEGEDPGISRKGGHPGQGRGTKTMARGGPASNAGGRGRGSMRMQQPKTQNGIGKKALGEIEILHTETLLKEVEKVFGSVNPNPAEVEKAKRVLRDHELALMDAIAKLEEISDGESGNI.

Residues 1–40 are disordered; the sequence is MDYRPSDSSGTDDDLPPSHQGRYQRNARPTGNGRPSVLNS. An ENT domain is found at 50-137; it reads METQIHLIEQ…PQLVHDAPSP (88 aa). Residues 81-107 are a coiled coil; sequence ESLITELRKELRVSDEEHRELLSRVNA. 2 disordered regions span residues 122–221 and 284–330; these read SLQS…SYDP and DPGI…TQNG. Polar residues predominate over residues 164-174; it reads LHPSMQPSSSA. The Nuclear localization signal signature appears at 175–182; the sequence is LRRGGPPP. Positions 363 to 389 form a coiled coil; the sequence is AEVEKAKRVLRDHELALMDAIAKLEEI. Serine 390 is modified (phosphoserine).

It localises to the nucleus. Probably involved in the regulation of chromatin states. Contributes to basal immunity. This is Protein EMSY-LIKE 3 from Arabidopsis thaliana (Mouse-ear cress).